Here is a 362-residue protein sequence, read N- to C-terminus: MVHHDPIGLIAPNTGLAQLNERSRDIFRQIVESYLATGEPVGSRNISRLITMPLSPASVRNVMSDLEQLGLIYAPHTSAGRLPTEFGLRFFVDALMQVGDLTETERQSIQTQLASVGKAQSVEAALDQALTRLSGLTRAAAVVLTAKSNVRLKHIEFVRLEPEKALVVLVAEDGQVENRVLTLPSGVPASALTEASNFLNARIRGRTLAEARLELETALTQSKAELDQLTQKVIAAGIASWSGGDSDDRQLIVRGHANLLEDLHALEDLERVRLLFDDLETKRGVIDLLGRAERADGVRIFIGSENKLFSLSGSSTIIAPYNDGAGHIVGVLGVIGPTRLNYARVIPMVDYAARIVSQMLGG.

It belongs to the HrcA family.

Negative regulator of class I heat shock genes (grpE-dnaK-dnaJ and groELS operons). Prevents heat-shock induction of these operons. This is Heat-inducible transcription repressor HrcA from Nitrobacter hamburgensis (strain DSM 10229 / NCIMB 13809 / X14).